Consider the following 443-residue polypeptide: ATP-dependent protease ATPase subunit HslU (443 aa).

ATP is bound by residues V18, 60-65 (GVGKTE), D256, E321, and R393.

Belongs to the ClpX chaperone family. HslU subfamily. A double ring-shaped homohexamer of HslV is capped on each side by a ring-shaped HslU homohexamer. The assembly of the HslU/HslV complex is dependent on binding of ATP.

Its subcellular location is the cytoplasm. Its function is as follows. ATPase subunit of a proteasome-like degradation complex; this subunit has chaperone activity. The binding of ATP and its subsequent hydrolysis by HslU are essential for unfolding of protein substrates subsequently hydrolyzed by HslV. HslU recognizes the N-terminal part of its protein substrates and unfolds these before they are guided to HslV for hydrolysis. In Azoarcus sp. (strain BH72), this protein is ATP-dependent protease ATPase subunit HslU.